The sequence spans 154 residues: 6,7-dimethyl-8-ribityllumazine synthase (154 aa).

5-amino-6-(D-ribitylamino)uracil-binding positions include F23, 57-59 (AYE), and 81-83 (AVI). 86 to 87 (AT) provides a ligand contact to (2S)-2-hydroxy-3-oxobutyl phosphate. Catalysis depends on H89, which acts as the Proton donor. Residue F114 coordinates 5-amino-6-(D-ribitylamino)uracil. R128 serves as a coordination point for (2S)-2-hydroxy-3-oxobutyl phosphate.

Belongs to the DMRL synthase family.

The catalysed reaction is (2S)-2-hydroxy-3-oxobutyl phosphate + 5-amino-6-(D-ribitylamino)uracil = 6,7-dimethyl-8-(1-D-ribityl)lumazine + phosphate + 2 H2O + H(+). It functions in the pathway cofactor biosynthesis; riboflavin biosynthesis; riboflavin from 2-hydroxy-3-oxobutyl phosphate and 5-amino-6-(D-ribitylamino)uracil: step 1/2. Its function is as follows. Catalyzes the formation of 6,7-dimethyl-8-ribityllumazine by condensation of 5-amino-6-(D-ribitylamino)uracil with 3,4-dihydroxy-2-butanone 4-phosphate. This is the penultimate step in the biosynthesis of riboflavin. The protein is 6,7-dimethyl-8-ribityllumazine synthase of Desulforamulus reducens (strain ATCC BAA-1160 / DSM 100696 / MI-1) (Desulfotomaculum reducens).